The following is a 178-amino-acid chain: uncharacterized protein (178 aa).

This is an uncharacterized protein from Rhizobium fredii (Sinorhizobium fredii).